We begin with the raw amino-acid sequence, 470 residues long: Methylenetetrahydrofolate--tRNA-(uracil-5-)-methyltransferase TrmFO (470 aa).

Position 10–15 (10–15) interacts with FAD; it reads GAGLAG.

The protein belongs to the MnmG family. TrmFO subfamily. Requires FAD as cofactor.

The protein resides in the cytoplasm. The catalysed reaction is uridine(54) in tRNA + (6R)-5,10-methylene-5,6,7,8-tetrahydrofolate + NADH + H(+) = 5-methyluridine(54) in tRNA + (6S)-5,6,7,8-tetrahydrofolate + NAD(+). The enzyme catalyses uridine(54) in tRNA + (6R)-5,10-methylene-5,6,7,8-tetrahydrofolate + NADPH + H(+) = 5-methyluridine(54) in tRNA + (6S)-5,6,7,8-tetrahydrofolate + NADP(+). Its function is as follows. Catalyzes the folate-dependent formation of 5-methyl-uridine at position 54 (M-5-U54) in all tRNAs. This Prochlorococcus marinus (strain MIT 9312) protein is Methylenetetrahydrofolate--tRNA-(uracil-5-)-methyltransferase TrmFO.